The chain runs to 555 residues: 3-oxocholest-4-en-26-oate--CoA ligase (555 aa).

ATP is bound by residues 172–180 (TGGTTGHPK), Asp-418, Arg-433, and Lys-524. Residues 525–555 (PDYRWAKDQTGLRPADEVYNNGDGNGAAATG) are disordered. Over residues 544-555 (NNGDGNGAAATG) the composition is skewed to low complexity.

This sequence belongs to the ATP-dependent AMP-binding enzyme family.

It carries out the reaction (25S)-3-oxocholest-4-en-26-oate + ATP + CoA = (25S)-3-oxocholest-4-en-26-oyl-CoA + AMP + diphosphate. It functions in the pathway steroid metabolism; cholesterol metabolism. Involved in the degradation of the side chains of C-24 branched-chain sterols. Catalyzes the ATP-dependent CoA thioesterification of the sterol 3-oxocholest-4-en-26-oate to yield 3-oxocholest-4-en-26-oyl-CoA. It can also use beta-sitosterol, campesterol and 3beta-hydroxy-5-cholesten-26-oate. The protein is 3-oxocholest-4-en-26-oate--CoA ligase of Rhodococcus rhodochrous.